The primary structure comprises 102 residues: Parathymosin (102 aa).

Residues 1-102 (MSEKSVEAAA…RQKTENGASA (102 aa)) are disordered. Position 2 is an N-acetylserine (Ser-2). Ser-2 is modified (phosphoserine). Lys-4 is modified (N6-acetyllysine). 2 positions are modified to phosphoserine: Ser-5 and Ser-13. The segment covering 13-37 (SAKDLKEKKEKVEEKASRKERKKEV) has biased composition (basic and acidic residues). Position 15 is an N6-acetyllysine (Lys-15). A compositionally biased stretch (acidic residues) spans 38–76 (VEEEENGAEEEEEETAEDGEEEDEGEEEDEEEEEEDDEG). The residue at position 52 (Thr-52) is a Phosphothreonine. At Lys-92 the chain carries N6-acetyllysine.

It belongs to the pro/parathymosin family.

Its function is as follows. Parathymosin may mediate immune function by blocking the effect of prothymosin alpha which confers resistance to certain opportunistic infections. The chain is Parathymosin (PTMS) from Homo sapiens (Human).